A 141-amino-acid polypeptide reads, in one-letter code: MSNITIYHNPACGTSRNTLEMIRNSGTEPTIIHYLETPPTRDELVKLIADMGISVRALLRKNVEPYEELGLAEDKFTDDRLIDFMLQHPILINRPIVVTPLGTRLCRPSEVVLEILPDAQKGAFSKEDGEKVVDEAGKRLK.

Cys12 functions as the Nucleophile; cysteine thioarsenate intermediate in the catalytic mechanism.

The protein belongs to the ArsC family.

The catalysed reaction is [glutaredoxin]-dithiol + arsenate + glutathione + H(+) = glutathionyl-S-S-[glutaredoxin] + arsenite + H2O. Its function is as follows. Involved in resistance to arsenate. Catalyzes the reduction of arsenate [As(V)] to arsenite [As(III)]. The sequence is that of Arsenate reductase from Escherichia coli (strain K12).